Here is a 670-residue protein sequence, read N- to C-terminus: Polar flagellar hook-associated protein 2 (670 aa).

The segment at 226-300 (PLQAPQQPDQ…RSSLRPEERI (75 aa)) is disordered. Residues 257–266 (AQDDAQDDAS) show a composition bias toward acidic residues. Low complexity predominate over residues 272 to 283 (AAGAEAAKAGQE). Residues 284–300 (AIDKANQRSSLRPEERI) show a composition bias toward basic and acidic residues. A coiled-coil region spans residues 342–428 (GTLTDSYVTT…AQSSFEEYLG (87 aa)).

This sequence belongs to the FliD family. As to quaternary structure, homopentamer.

The protein resides in the secreted. The protein localises to the bacterial flagellum. Functionally, required for the morphogenesis and for the elongation of the flagellar filament by facilitating polymerization of the flagellin monomers at the tip of growing filament. Forms a capping structure, which prevents flagellin subunits (transported through the central channel of the flagellum) from leaking out without polymerization at the distal end. Important for swimming motility. In Vibrio parahaemolyticus serotype O3:K6 (strain RIMD 2210633), this protein is Polar flagellar hook-associated protein 2 (fliDP).